The chain runs to 51 residues: Large ribosomal subunit protein bL33 (51 aa).

Belongs to the bacterial ribosomal protein bL33 family.

The polypeptide is Large ribosomal subunit protein bL33 (Vesicomyosocius okutanii subsp. Calyptogena okutanii (strain HA)).